We begin with the raw amino-acid sequence, 176 residues long: Protein FAM89A (176 aa).

The tract at residues 140-165 is disordered; that stretch reads DFQEQGSLRDGQGRGSPGDPSLPLTH.

It belongs to the FAM89 family.

In Rattus norvegicus (Rat), this protein is Protein FAM89A (Fam89a).